The chain runs to 381 residues: Curved DNA-binding protein (381 aa).

Serine 8 carries the phosphoserine modification. Phosphothreonine is present on threonine 362. Positions 368-375 (KNKKKSKK) match the Nuclear localization signal motif.

Belongs to the peptidase M24 family.

The protein resides in the nucleus. In terms of biological role, a non-essential protein that preferentially binds curved DNA. Binds non-curved DNA with a much lower affinity. The protein is Curved DNA-binding protein (cdb4) of Schizosaccharomyces pombe (strain 972 / ATCC 24843) (Fission yeast).